We begin with the raw amino-acid sequence, 827 residues long: Thymine dioxygenase JBP1 (827 aa).

Positions Gln-62–Ala-264 are thymine dioxygenase. Fe cation-binding residues include His-189, Asp-191, and His-239. Arg-255 contacts 2-oxoglutarate. 2 disordered regions span residues Pro-364–Leu-383 and Pro-539–Arg-568. The DNA-binding JBP1 domain stretch occupies residues Thr-392–Pro-561. Residues Pro-539–Arg-557 are compositionally biased toward basic and acidic residues.

The protein belongs to the TET family. JBP1 subfamily. Monomer. Binds to DNA as a monomer. Fe(2+) is required as a cofactor.

The protein resides in the nucleus. It catalyses the reaction thymine + 2-oxoglutarate + O2 = 5-hydroxymethyluracil + succinate + CO2. In terms of biological role, dioxygenase that catalyzes the first step of DNA base J (beta-d-glucosyl-HOMedU) biosynthesis by converting thymine to 5-hydroxymethyluracil (HOMedU). DNA base J is a hypermodified thymidine residue found in the genome of kinetoplastid parasites, which is localized primarily to repetitive DNA, namely the telomeres, and is implicated in the regulation of antigenic variation. Also specifically binds to base J-containing DNA (J-DNA). Involved in propagation and maintenance of DNA base J synthesis initiated by JBP2 by specifically binding already synthesized DNA base J and propagating J synthesis. Thymine dioxygenase activity and J-DNA-binding are independent functions. This is Thymine dioxygenase JBP1 (JBP1) from Leishmania tarentolae (Sauroleishmania tarentolae).